A 237-amino-acid chain; its full sequence is Ribosomal RNA small subunit methyltransferase G (237 aa).

S-adenosyl-L-methionine is bound by residues glycine 78, phenylalanine 83, alanine 129–glutamate 130, and arginine 148.

This sequence belongs to the methyltransferase superfamily. RNA methyltransferase RsmG family.

It localises to the cytoplasm. Its function is as follows. Specifically methylates the N7 position of a guanine in 16S rRNA. The chain is Ribosomal RNA small subunit methyltransferase G from Streptococcus equi subsp. zooepidemicus (strain MGCS10565).